Reading from the N-terminus, the 367-residue chain is Molybdopterin synthase catalytic subunit (367 aa).

Substrate contacts are provided by residues 101 to 102 (HR), Lys117, and 124 to 126 (KKE). Positions 326–345 (HFTKREPSSMEAAPPKKIRK) are disordered.

This sequence belongs to the MoaE family. MOCS2B subfamily. As to quaternary structure, heterotetramer; composed of 2 small (Mocs2A) and 2 large (Mocs2B) subunits.

It localises to the cytoplasm. The enzyme catalyses 2 [molybdopterin-synthase sulfur-carrier protein]-C-terminal-Gly-aminoethanethioate + cyclic pyranopterin phosphate + H2O = molybdopterin + 2 [molybdopterin-synthase sulfur-carrier protein]-C-terminal Gly-Gly + 2 H(+). Its pathway is cofactor biosynthesis; molybdopterin biosynthesis. In terms of biological role, catalytic subunit of the molybdopterin synthase complex, a complex that catalyzes the conversion of precursor Z into molybdopterin. Acts by mediating the incorporation of 2 sulfur atoms from thiocarboxylated Mocs2A into precursor Z to generate a dithiolene group. The sequence is that of Molybdopterin synthase catalytic subunit from Drosophila sechellia (Fruit fly).